The primary structure comprises 98 residues: Large ribosomal subunit protein eL21 (98 aa).

This sequence belongs to the eukaryotic ribosomal protein eL21 family.

In Korarchaeum cryptofilum (strain OPF8), this protein is Large ribosomal subunit protein eL21.